We begin with the raw amino-acid sequence, 322 residues long: Ferredoxin--NADP reductase (322 aa).

Residues Asp34, Gln42, Tyr47, Val87, Phe120, Asp279, and Thr320 each contribute to the FAD site.

It belongs to the ferredoxin--NADP reductase type 2 family. As to quaternary structure, homodimer. It depends on FAD as a cofactor.

The enzyme catalyses 2 reduced [2Fe-2S]-[ferredoxin] + NADP(+) + H(+) = 2 oxidized [2Fe-2S]-[ferredoxin] + NADPH. The sequence is that of Ferredoxin--NADP reductase from Streptococcus gordonii (strain Challis / ATCC 35105 / BCRC 15272 / CH1 / DL1 / V288).